Here is a 688-residue protein sequence, read N- to C-terminus: Potassium-transporting ATPase ATP-binding subunit (688 aa).

The next 4 membrane-spanning stretches (helical) occupy residues 37–57, 65–85, 219–239, and 262–282; these read FIVYIASILTTVLYVFSLFGI, ILFISILLWFTVLFANFAEAI, IALQILLVSLTIIFLVVTASL, and LALLVCLAPTTIGALLSAIGI. Asp-313 functions as the 4-aspartylphosphate intermediate in the catalytic mechanism. Residues Asp-350, Glu-354, 383 to 390, and Lys-401 each bind ATP; that span reads FTAKTRMS. Mg(2+) is bound by residues Asp-524 and Asp-528. The next 3 helical transmembrane spans lie at 586–606, 622–642, and 668–688; these read IANDIAKYFAIIPPLFIGLFP, AILSAVIYNAFIIIFLIPLAL, and IIAPFIAIKGIDILITMLGIV.

The protein belongs to the cation transport ATPase (P-type) (TC 3.A.3) family. Type IA subfamily. In terms of assembly, the system is composed of three essential subunits: KdpA, KdpB and KdpC.

It localises to the cell membrane. It catalyses the reaction K(+)(out) + ATP + H2O = K(+)(in) + ADP + phosphate + H(+). In terms of biological role, part of the high-affinity ATP-driven potassium transport (or Kdp) system, which catalyzes the hydrolysis of ATP coupled with the electrogenic transport of potassium into the cytoplasm. This subunit is responsible for energy coupling to the transport system and for the release of the potassium ions to the cytoplasm. The protein is Potassium-transporting ATPase ATP-binding subunit of Clostridium perfringens (strain ATCC 13124 / DSM 756 / JCM 1290 / NCIMB 6125 / NCTC 8237 / Type A).